Here is a 251-residue protein sequence, read N- to C-terminus: Triosephosphate isomerase (251 aa).

9-11 serves as a coordination point for substrate; it reads NWK. Histidine 95 functions as the Electrophile in the catalytic mechanism. The Proton acceptor role is filled by glutamate 167. Substrate is bound by residues glycine 173, serine 212, and 233–234; that span reads GG.

The protein belongs to the triosephosphate isomerase family. As to quaternary structure, homodimer.

It is found in the cytoplasm. The enzyme catalyses D-glyceraldehyde 3-phosphate = dihydroxyacetone phosphate. The protein operates within carbohydrate biosynthesis; gluconeogenesis. It functions in the pathway carbohydrate degradation; glycolysis; D-glyceraldehyde 3-phosphate from glycerone phosphate: step 1/1. Involved in the gluconeogenesis. Catalyzes stereospecifically the conversion of dihydroxyacetone phosphate (DHAP) to D-glyceraldehyde-3-phosphate (G3P). The protein is Triosephosphate isomerase of Vibrio sp. (strain ANT-300).